Here is a 180-residue protein sequence, read N- to C-terminus: Zinc finger protein 740 (180 aa).

Residues 1-11 are compositionally biased toward polar residues; it reads MMLSQIASKQA. The tract at residues 1 to 62 is disordered; it reads MMLSQIASKQ…KEDDSLAEAS (62 aa). A Glycyl lysine isopeptide (Lys-Gly) (interchain with G-Cter in SUMO2) cross-link involves residue Lys-9. Ser-19 carries the post-translational modification Phosphoserine. The segment covering 31-56 has biased composition (basic and acidic residues); it reads CKPRFDLSSKGHRKDSDKSRNRKEDD. 2 consecutive C2H2-type zinc fingers follow at residues 88–110 and 116–138; these read FICE…VLIH and FECD…KRVH. The segment at 144 to 166 adopts a C2H2-type 3; atypical zinc-finger fold; the sequence is YQCERCHQCFSRTDRLLRHKRMC.

Belongs to the krueppel C2H2-type zinc-finger protein family.

The protein resides in the nucleus. Its function is as follows. May be involved in transcriptional regulation. The sequence is that of Zinc finger protein 740 (Znf740) from Mus musculus (Mouse).